The following is a 544-amino-acid chain: Chaperonin GroEL 1 (544 aa).

ATP contacts are provided by residues 29 to 32, 86 to 90, G413, 479 to 481, and D495; these read TLGP, DGTTT, and NAA.

This sequence belongs to the chaperonin (HSP60) family. As to quaternary structure, forms a cylinder of 14 subunits composed of two heptameric rings stacked back-to-back. Interacts with the co-chaperonin GroES.

Its subcellular location is the cytoplasm. It carries out the reaction ATP + H2O + a folded polypeptide = ADP + phosphate + an unfolded polypeptide.. Functionally, together with its co-chaperonin GroES, plays an essential role in assisting protein folding. The GroEL-GroES system forms a nano-cage that allows encapsulation of the non-native substrate proteins and provides a physical environment optimized to promote and accelerate protein folding. The protein is Chaperonin GroEL 1 of Trichormus variabilis (strain ATCC 29413 / PCC 7937) (Anabaena variabilis).